A 374-amino-acid polypeptide reads, in one-letter code: WW domain-binding protein 4 (374 aa).

The segment at 11–42 (KFCDYCKCWIADNRPSVEFHERGKNHKENVAR) adopts a Matrin-type zinc-finger fold. Over residues 91-109 (EPTISPVTNTVQPTPTANQ) the composition is skewed to polar residues. 2 disordered regions span residues 91-126 (EPTI…SKGR) and 188-328 (SKWE…EAGA). A compositionally biased stretch (basic residues) spans 112–121 (EKKKKKKKKE). WW domains follow at residues 121–154 (EASK…KPEG) and 162–195 (TAAK…KPDD). 2 stretches are compositionally biased toward basic and acidic residues: residues 188 to 197 (SKWEKPDDFI) and 205 to 270 (SSKD…EKTT). A phosphoserine mark is found at Ser-219, Ser-226, and Ser-228. Residues 315-325 (STENECLSSSE) show a composition bias toward polar residues. Residues 355-373 (KKRRIENGKSRNLRQRGED) form an interaction with SNRNP200 region.

In terms of assembly, component of the spliceosome B complex. Associated with U2 snRNPs. Binds splicing factors SNRPB, SNRPC and SF1. Interacts via the WW domains with the Pro-rich domains of KHDRBS1/SAM68. Interacts via the WW domains with the Pro-rich domains of WBP11. Interacts with SNRNP200.

It is found in the nucleus. The protein resides in the nucleus speckle. Its function is as follows. Involved in pre-mRNA splicing as a component of the spliceosome. May play a role in cross-intron bridging of U1 and U2 snRNPs in the mammalian A complex. The sequence is that of WW domain-binding protein 4 (Wbp4) from Rattus norvegicus (Rat).